We begin with the raw amino-acid sequence, 194 residues long: dITP/XTP pyrophosphatase (194 aa).

Position 8 to 13 (8 to 13 (TSNPGK)) interacts with substrate. Glu38 and Asp67 together coordinate Mg(2+). Asp67 serves as the catalytic Proton acceptor. Substrate contacts are provided by residues Ser68, 152 to 155 (FGYD), Lys175, and 180 to 181 (HR).

It belongs to the HAM1 NTPase family. As to quaternary structure, homodimer. It depends on Mg(2+) as a cofactor.

The catalysed reaction is XTP + H2O = XMP + diphosphate + H(+). The enzyme catalyses dITP + H2O = dIMP + diphosphate + H(+). It carries out the reaction ITP + H2O = IMP + diphosphate + H(+). Pyrophosphatase that catalyzes the hydrolysis of nucleoside triphosphates to their monophosphate derivatives, with a high preference for the non-canonical purine nucleotides XTP (xanthosine triphosphate), dITP (deoxyinosine triphosphate) and ITP. Seems to function as a house-cleaning enzyme that removes non-canonical purine nucleotides from the nucleotide pool, thus preventing their incorporation into DNA/RNA and avoiding chromosomal lesions. In Legionella pneumophila (strain Paris), this protein is dITP/XTP pyrophosphatase.